We begin with the raw amino-acid sequence, 891 residues long: 26S proteasome non-ATPase regulatory subunit 2 homolog A (891 aa).

A disordered region spans residues 1–44 (MAPTQDPNSVGGGAKKDEATLKVPSKDPKKKDEKKDEDLSEEDL). The short motif at 14–21 (AKKDEATL) is the Nuclear localization signal element. Positions 14–37 (AKKDEATLKVPSKDPKKKDEKKDE) are enriched in basic and acidic residues. A Glycyl lysine isopeptide (Lys-Gly) (interchain with G-Cter in ubiquitin) cross-link involves residue Lys218. The residue at position 219 (Thr219) is an O-acetylthreonine. PC repeat units lie at residues 414 to 447 (SAAA…PIIA), 448 to 484 (GALL…SVRI), 485 to 519 (GAIM…PLDV), 522 to 556 (FASL…AELG), 565 to 594 (LGLG…KIRK), 674 to 705 (LALG…EVAM), and 724 to 739 (AGML…KDMS).

The protein belongs to the proteasome subunit S2 family. As to quaternary structure, component of the 19S regulatory particle (RP/PA700) base subcomplex of the 26S proteasome. The 26S proteasome is composed of a core protease (CP), known as the 20S proteasome, capped at one or both ends by the 19S regulatory particle (RP/PA700). The RP/PA700 complex is composed of at least 17 different subunits in two subcomplexes, the base and the lid, which form the portions proximal and distal to the 20S proteolytic core, respectively. Interacts with JMJ27. As to expression, expressed in stems, leaves, buds, flowers, siliques and developing seeds.

The protein localises to the nucleus. Its subcellular location is the cytoplasm. In terms of biological role, acts as a regulatory subunit of the 26 proteasome which is involved in the ATP-dependent degradation of ubiquitinated proteins. Required during embryogenesis. Required for optimal plant growth and stress responses. Required for innate immunity. Prevents JMJ27 accumulation in non-drought conditions. This chain is 26S proteasome non-ATPase regulatory subunit 2 homolog A, found in Arabidopsis thaliana (Mouse-ear cress).